Here is a 232-residue protein sequence, read N- to C-terminus: Protein Mis18-alpha (232 aa).

A phosphoserine mark is found at serine 36, serine 39, and serine 40. The Mis18 domain maps to 79–177 (PLVFLCSGCR…SVEAIESYVL (99 aa)). The Zn(2+) site is built by cysteine 84, cysteine 87, cysteine 140, and cysteine 143. Lysine 161 participates in a covalent cross-link: Glycyl lysine isopeptide (Lys-Gly) (interchain with G-Cter in SUMO2). Residue serine 232 is modified to Phosphoserine.

This sequence belongs to the mis18 family. Homodimer, and heterodimer with OIP5/MIS18B. Identified in a complex containing MIS18A, OIP5/MIS18B, MIS18BP1, RBBP7 and RBBP4.

Its subcellular location is the nucleus. It is found in the chromosome. The protein localises to the centromere. Functionally, required for recruitment of CENPA to centromeres and normal chromosome segregation during mitosis. This is Protein Mis18-alpha (MIS18A) from Pan troglodytes (Chimpanzee).